The primary structure comprises 487 residues: WAS/WASL-interacting protein family member 1 (487 aa).

Residues 1-14 show a composition bias toward pro residues; the sequence is MPVPPPPAPPPPPT. The tract at residues 1 to 487 is disordered; sequence MPVPPPPAPP…GAPPLPPIPR (487 aa). Residues 21 to 31 are compositionally biased toward polar residues; that stretch reads EKPSLNKTEQA. In terms of domain architecture, WH2 spans 32–49; the sequence is GRNALLSDISKGKKLKKT. Asymmetric dimethylarginine is present on Arg-33. The segment at 45–48 is binds actin; sequence KLKK. Residues 64-100 show a composition bias toward gly residues; that stretch reads GAGGGYGGGSGGGGGGGSSGGGGNFGGGGPPGLGGLF. An omega-N-methylarginine mark is found at Arg-121 and Arg-130. A compositionally biased stretch (low complexity) spans 136 to 147; it reads PFSSPSGPGRFP. Ser-138 is modified (phosphoserine). Composition is skewed to pro residues over residues 157 to 170 and 178 to 190; these read PPEP…PPRP and SLPP…PRPI. Position 222 is a phosphoserine (Ser-222). 3 stretches are compositionally biased toward pro residues: residues 234 to 243, 269 to 285, and 293 to 309; these read FPRPPLPPTP, VPPP…PSTP, and APPP…PLPP. Ser-324 is modified (phosphoserine). The span at 328–355 shows a compositional bias: pro residues; that stretch reads PTPPLPSPGRSGPLPPPPTERPPPPVRD. Thr-329 carries the post-translational modification Phosphothreonine. At Ser-334 the chain carries Phosphoserine. XRSGPXPPXP motif repeat units lie at residues 336–345, 358–367, and 394–403; these read GRSGPLPPPP and PRSGPRPPLP. Pro residues predominate over residues 397 to 418; sequence GPRPPLPPDRPGAGAPPPPPPS. Polar residues predominate over residues 419 to 428; the sequence is TSVRNGFQDS. Residues 464-478 are compositionally biased toward basic and acidic residues; it reads ARSESRSGSNRRERG.

This sequence belongs to the verprolin family. In terms of assembly, binds to WAS within the N-terminal region, at a site distinct from the CDC42-binding site. Binds profilin and actin. Interacts with DBNL. Binds to WASL. Interacts with DBNL. Interacts with FNBP1L (via the SH3 domain). In terms of tissue distribution, isoforms were differentially expressed. One isoform was ubiquitously expressed, another was muscle-specific and another was expressed in the liver, heart and testis.

The protein resides in the cytoplasmic vesicle. It localises to the cytoplasm. It is found in the cytoskeleton. The protein localises to the cell projection. Its subcellular location is the ruffle. Its function is as follows. Plays a role in the reorganization of the actin cytoskeleton. Contributes with NCK1 and GRB2 in the recruitment and activation of WASL. Plays a role in the formation of cell ruffles. May participate in regulating the subcellular localization of WASL, resulting in the disassembly of stress fibers in favor of filopodia formation. In Rattus norvegicus (Rat), this protein is WAS/WASL-interacting protein family member 1 (Wipf1).